The primary structure comprises 500 residues: NAD(P)H-quinone oxidoreductase chain 4, chloroplastic (500 aa).

A run of 14 helical transmembrane segments spans residues 4-24 (FPWL…IFLL), 37-57 (LCIC…HFQL), 87-107 (IGPI…AWPV), 111-131 (AQLF…SFSS), 134-154 (LLLF…LLSM), 167-187 (FILY…GIGL), 208-228 (ALEV…LPII), 242-262 (HYST…YGLV), 272-292 (AHCL…IYAA), 305-325 (IAYS…SLSD), 330-350 (GAIL…FLAG), 386-406 (LALP…GIIT), 416-436 (ILIA…SLSM), and 462-482 (LFVS…PDFV).

Belongs to the complex I subunit 4 family.

The protein resides in the plastid. It localises to the chloroplast thylakoid membrane. It carries out the reaction a plastoquinone + NADH + (n+1) H(+)(in) = a plastoquinol + NAD(+) + n H(+)(out). It catalyses the reaction a plastoquinone + NADPH + (n+1) H(+)(in) = a plastoquinol + NADP(+) + n H(+)(out). The polypeptide is NAD(P)H-quinone oxidoreductase chain 4, chloroplastic (Oenothera biennis (German evening primrose)).